Here is a 418-residue protein sequence, read N- to C-terminus: Mitochondrial outer membrane protein SLC25A46 (418 aa).

2 positions are modified to phosphoserine: S32 and S35. At T45 the chain carries Phosphothreonine. The disordered stretch occupies residues P46–Q96. A Solcar 1 repeat occupies Q96–P187. A run of 6 helical transmembrane segments spans residues F103 to L123, F167 to P187, H202 to I222, L258 to I278, F314 to L334, and V382 to I402. A Solcar 2 repeat occupies D311 to N416.

Belongs to the mitochondrial carrier (TC 2.A.29) family. Associates with the mitochondrial contact site and cristae organizing system (MICOS) complex. May associate with the endoplasmic reticulum membrane protein complex (EMC). Widely expressed. Highly expressed in hindbrain, spinal cord and brain coronal sections containing corpus callosum, fornix, optic chiasm, thalamus, hypothalamus, midbrain, pons and cerebellum.

It localises to the mitochondrion outer membrane. Its function is as follows. Transmembrane protein of the mitochondrial outer membrane that controls mitochondrial organization. May regulate the assembly of the MICOS (mitochondrial contact site and cristae organizing system) complex which is essential to the biogenesis and dynamics of mitochondrial cristae, the inwards folds of the inner mitochondrial membrane. Through its interaction with the EMC (endoplasmic reticulum membrane protein complex), could regulate mitochondrial lipid homeostasis and thereby mitochondrial fission. The chain is Mitochondrial outer membrane protein SLC25A46 from Rattus norvegicus (Rat).